A 608-amino-acid polypeptide reads, in one-letter code: Glutamine--fructose-6-phosphate aminotransferase [isomerizing] (608 aa).

The active-site Nucleophile; for GATase activity is cysteine 2. Positions 2-217 constitute a Glutamine amidotransferase type-2 domain; the sequence is CGIVGIVGNQ…DGDWAVIGKT (216 aa). SIS domains follow at residues 281–422 and 456–598; these read ISDA…ARGT and LSRE…VDQP. The active-site For Fru-6P isomerization activity is the lysine 603.

Homodimer.

The protein resides in the cytoplasm. The catalysed reaction is D-fructose 6-phosphate + L-glutamine = D-glucosamine 6-phosphate + L-glutamate. Its function is as follows. Catalyzes the first step in hexosamine metabolism, converting fructose-6P into glucosamine-6P using glutamine as a nitrogen source. In Rhizobium meliloti (strain 1021) (Ensifer meliloti), this protein is Glutamine--fructose-6-phosphate aminotransferase [isomerizing].